The primary structure comprises 183 residues: Caspase recruitment domain-containing protein 19 (183 aa).

Cys-7 and Cys-77 are disulfide-bonded. The region spanning 8–99 (DRLVQDTPFL…PLHSHLPSRY (92 aa)) is the CARD domain. The chain crosses the membrane as a helical span at residues 122–142 (GPMSFLAGLGLAAGLALLLYC).

Associates with BCL10 by CARD-CARD interaction.

It localises to the endoplasmic reticulum membrane. It is found in the mitochondrion membrane. In terms of biological role, plays a role in inhibiting the effects of BCL10-induced activation of NF-kappa-B. The polypeptide is Caspase recruitment domain-containing protein 19 (Mus musculus (Mouse)).